The chain runs to 59 residues: Large ribosomal subunit protein uL30 (59 aa).

Belongs to the universal ribosomal protein uL30 family. Part of the 50S ribosomal subunit.

This Enterobacter sp. (strain 638) protein is Large ribosomal subunit protein uL30.